A 292-amino-acid chain; its full sequence is ATP synthase gamma chain (292 aa).

Belongs to the ATPase gamma chain family. F-type ATPases have 2 components, CF(1) - the catalytic core - and CF(0) - the membrane proton channel. CF(1) has five subunits: alpha(3), beta(3), gamma(1), delta(1), epsilon(1). CF(0) has three main subunits: a, b and c.

The protein localises to the cell membrane. In terms of biological role, produces ATP from ADP in the presence of a proton gradient across the membrane. The gamma chain is believed to be important in regulating ATPase activity and the flow of protons through the CF(0) complex. The protein is ATP synthase gamma chain of Prosthecochloris aestuarii (strain DSM 271 / SK 413).